The primary structure comprises 205 residues: Ribosomal RNA small subunit methyltransferase G (205 aa).

S-adenosyl-L-methionine-binding positions include G66, F71, 119–120 (IE), and R135.

This sequence belongs to the methyltransferase superfamily. RNA methyltransferase RsmG family.

It localises to the cytoplasm. The catalysed reaction is guanosine(527) in 16S rRNA + S-adenosyl-L-methionine = N(7)-methylguanosine(527) in 16S rRNA + S-adenosyl-L-homocysteine. Specifically methylates the N7 position of guanine in position 527 of 16S rRNA. This chain is Ribosomal RNA small subunit methyltransferase G, found in Rhizobium etli (strain ATCC 51251 / DSM 11541 / JCM 21823 / NBRC 15573 / CFN 42).